Here is a 408-residue protein sequence, read N- to C-terminus: LL-diaminopimelate aminotransferase (408 aa).

Tyrosine 15 and glycine 42 together coordinate substrate. Pyridoxal 5'-phosphate contacts are provided by residues tyrosine 72, 108-109 (SK), tyrosine 132, asparagine 187, tyrosine 218, and 246-248 (SFS). Substrate-binding residues include lysine 109, tyrosine 132, and asparagine 187. An N6-(pyridoxal phosphate)lysine modification is found at lysine 249. Arginine 257 and asparagine 292 together coordinate pyridoxal 5'-phosphate. Substrate is bound by residues asparagine 292 and arginine 388.

Belongs to the class-I pyridoxal-phosphate-dependent aminotransferase family. LL-diaminopimelate aminotransferase subfamily. As to quaternary structure, homodimer. It depends on pyridoxal 5'-phosphate as a cofactor.

The enzyme catalyses (2S,6S)-2,6-diaminopimelate + 2-oxoglutarate = (S)-2,3,4,5-tetrahydrodipicolinate + L-glutamate + H2O + H(+). The protein operates within amino-acid biosynthesis; L-lysine biosynthesis via DAP pathway; LL-2,6-diaminopimelate from (S)-tetrahydrodipicolinate (aminotransferase route): step 1/1. Its function is as follows. Involved in the synthesis of meso-diaminopimelate (m-DAP or DL-DAP), required for both lysine and peptidoglycan biosynthesis. Catalyzes the direct conversion of tetrahydrodipicolinate to LL-diaminopimelate. The sequence is that of LL-diaminopimelate aminotransferase from Prochlorococcus marinus (strain MIT 9303).